The following is a 257-amino-acid chain: MADKPMIQLKDVSKIYDNGTVGLKDINLKINKGEFVVVVGLSGAGKSTLLRSINRLHDISSGDILIDGKSITNAKGKNLRELRRDIGMIFQNFNLVKRSSVLRNVLVGRVAYYPTWKTTFNLFTKEDKQKAYEALQKVDLADKVYARADELSGGQQQRVAIARVLMQNPKIILADEPTASLDPQTSVRVMNDLKMLNEKYGMTVVANLHSIELAQQFGKRVIGIRAGQVVYDGKMEDTPKSVFTDIYNGGDGNEGAE.

Residues Ile7 to Asp251 enclose the ABC transporter domain. Gly40–Ser47 contributes to the ATP binding site.

The protein belongs to the ABC transporter superfamily. Phosphonates importer (TC 3.A.1.9.1) family. In terms of assembly, the complex is composed of two ATP-binding proteins (PhnC), two transmembrane proteins (PhnE) and a solute-binding protein (PhnD).

The protein resides in the cell membrane. The enzyme catalyses phosphonate(out) + ATP + H2O = phosphonate(in) + ADP + phosphate + H(+). Functionally, part of the ABC transporter complex PhnCDE involved in phosphonates import. Responsible for energy coupling to the transport system. This Lactobacillus acidophilus (strain ATCC 700396 / NCK56 / N2 / NCFM) protein is Phosphonates import ATP-binding protein PhnC.